We begin with the raw amino-acid sequence, 300 residues long: Ribosomal protein L11 methyltransferase (300 aa).

Residues threonine 152, glycine 173, aspartate 195, and asparagine 234 each contribute to the S-adenosyl-L-methionine site.

The protein belongs to the methyltransferase superfamily. PrmA family.

It localises to the cytoplasm. It carries out the reaction L-lysyl-[protein] + 3 S-adenosyl-L-methionine = N(6),N(6),N(6)-trimethyl-L-lysyl-[protein] + 3 S-adenosyl-L-homocysteine + 3 H(+). Methylates ribosomal protein L11. The polypeptide is Ribosomal protein L11 methyltransferase (Paraburkholderia xenovorans (strain LB400)).